Consider the following 116-residue polypeptide: Iron-sulfur cluster insertion protein ErpA (116 aa).

The iron-sulfur cluster site is built by C44, C108, and C110.

This sequence belongs to the HesB/IscA family. As to quaternary structure, homodimer. The cofactor is iron-sulfur cluster.

In terms of biological role, required for insertion of 4Fe-4S clusters for at least IspG. The chain is Iron-sulfur cluster insertion protein ErpA from Aeromonas salmonicida (strain A449).